The chain runs to 515 residues: AAA ATPase forming ring-shaped complexes (515 aa).

Positions Asn2 to Gly49 form a coiled coil. ATP is bound at residue Gly240–Leu245.

It belongs to the AAA ATPase family. Homohexamer. Assembles into a hexameric ring structure.

This Bifidobacterium adolescentis (strain ATCC 15703 / DSM 20083 / NCTC 11814 / E194a) protein is AAA ATPase forming ring-shaped complexes.